We begin with the raw amino-acid sequence, 343 residues long: Galactoside alpha-(1,2)-fucosyltransferase 2 (343 aa).

At 1–14 the chain is on the cytoplasmic side; that stretch reads MLVVQMPFSFPMAH. Residues 15–28 traverse the membrane as a helical; Signal-anchor for type II membrane protein segment; sequence FILFVFTVSTIFHV. Topologically, residues 29–343 are lumenal; sequence QQRLAKIQAM…AADLSPLLKH (315 aa). 3 N-linked (GlcNAc...) asparagine glycosylation sites follow: N188, N282, and N308.

Belongs to the glycosyltransferase 11 family.

Its subcellular location is the golgi apparatus. The protein resides in the golgi stack membrane. The enzyme catalyses a beta-D-galactosyl-(1-&gt;3)-N-acetyl-beta-D-glucosaminyl derivative + GDP-beta-L-fucose = an alpha-L-Fuc-(1-&gt;2)-beta-D-Gal-(1-&gt;3)-beta-D-GlcNAc derivative + GDP + H(+). The catalysed reaction is a beta-D-galactosyl-(1-&gt;4)-N-acetyl-beta-D-glucosaminyl derivative + GDP-beta-L-fucose = an alpha-L-Fuc-(1-&gt;2)-beta-D-Gal-(1-&gt;4)-beta-D-GlcNAc derivative + GDP + H(+). It catalyses the reaction a neolactoside nLc4Cer + GDP-beta-L-fucose = a neolactoside IV(2)-alpha-Fuc-nLc4Cer + GDP + H(+). It carries out the reaction a neolactoside nLc4Cer(d18:1(4E)) + GDP-beta-L-fucose = a neolactoside IV(2)-alpha-Fuc-nLc4Cer(d18:1(4E)) + GDP + H(+). The enzyme catalyses a ganglioside GM1 + GDP-beta-L-fucose = a ganglioside Fuc-GM1 + GDP + H(+). The catalysed reaction is a ganglioside GA1 + GDP-beta-L-fucose = a ganglioside Fuc-GA1 + GDP + H(+). It catalyses the reaction Lc4Cer + GDP-beta-L-fucose = alpha-L-fucosyl-(1-&gt;2)-beta-D-galactosyl-(1-&gt;3)-N-acetyl-beta-D-glucosaminyl-(1-&gt;3)-beta-D-galactosyl-(1-&gt;4)-beta-D-glucosyl-(1&lt;-&gt;1')-ceramide + GDP + H(+). It carries out the reaction a beta-D-Gal-(1-&gt;3)-beta-D-GlcNAc-(1-&gt;3)-beta-D-Gal-(1-&gt;4)-beta-D-Glc-(1&lt;-&gt;1')-Cer(d18:1(4E)) + GDP-beta-L-fucose = alpha-L-fucosyl-(1-&gt;2)- beta-D-galactosyl-(1-&gt;3)-N-acetyl-beta-D-glucosaminyl-(1-&gt;3)-beta-D-galactosyl-(1-&gt;4)-beta-D-glucosyl-(1&lt;-&gt;1')-N-acylsphing-4-enine + GDP + H(+). The enzyme catalyses a ganglioside GD1b + GDP-beta-L-fucose = a ganglioside Fuc-GD1b + GDP + H(+). The catalysed reaction is a ganglioside GM1 (d18:1(4E)) + GDP-beta-L-fucose = a ganglioside Fuc-GM1 (d18:1(4E)) + GDP + H(+). It catalyses the reaction a globoside GalGb4Cer (d18:1(4E)) + GDP-beta-L-fucose = a globoside Globo-H (d18:1(4E)) + GDP + H(+). It carries out the reaction a lactoside III(4)-a-Fuc-Lc4Cer + GDP-beta-L-fucose = a lactoside IV(2),III(4)-a-[Fuc]2-Lc4Cer + GDP + H(+). The enzyme catalyses beta-D-galactosyl-(1-&gt;3)-N-acetyl-D-galactosamine + GDP-beta-L-fucose = alpha-L-fucosyl-(1-&gt;2)-beta-D-galactosyl-(1-&gt;3)-N-acetyl-D-galactosamine + GDP + H(+). The protein operates within protein modification; protein glycosylation. In terms of biological role, catalyzes the transfer of L-fucose, from a guanosine diphosphate-beta-L-fucose, to the terminal galactose on both O- and N-linked glycans chains of cell surface glycoproteins and glycolipids and the resulting epitope regulates several processes such as cell-cell interaction including host-microbe interaction, cell surface expression and cell proliferation. Preferentially fucosylates gangliosides GA1 and GM1 in the antrum, cecum and colon and in the female reproductive organs. Fucosylated host glycoproteins or glycolipids mediate interaction with intestinal microbiota influencing its composition. Creates a soluble precursor oligosaccharide FuC-alpha ((1,2)Galbeta-) called the H antigen which is an essential substrate for the final step in the soluble ABO blood group antigen synthesis pathway. This chain is Galactoside alpha-(1,2)-fucosyltransferase 2, found in Gorilla gorilla gorilla (Western lowland gorilla).